A 401-amino-acid polypeptide reads, in one-letter code: Glutamyl-tRNA reductase (401 aa).

Residues 45-48 (TCNR), Ser101, 106-108 (EDQ), and Gln112 each bind substrate. The active-site Nucleophile is Cys46. An NADP(+)-binding site is contributed by 177–182 (GYGEVG).

It belongs to the glutamyl-tRNA reductase family. As to quaternary structure, homodimer.

The enzyme catalyses (S)-4-amino-5-oxopentanoate + tRNA(Glu) + NADP(+) = L-glutamyl-tRNA(Glu) + NADPH + H(+). It functions in the pathway porphyrin-containing compound metabolism; protoporphyrin-IX biosynthesis; 5-aminolevulinate from L-glutamyl-tRNA(Glu): step 1/2. Its function is as follows. Catalyzes the NADPH-dependent reduction of glutamyl-tRNA(Glu) to glutamate 1-semialdehyde (GSA). This chain is Glutamyl-tRNA reductase, found in Clostridium beijerinckii (strain ATCC 51743 / NCIMB 8052) (Clostridium acetobutylicum).